Consider the following 384-residue polypeptide: MTAMEGASGSSFGIDTILSGAGSGSPGMMNGDFRSLGEARTTDFRSQATPSPCSEIDTVGTAPSSPISVTLEPPEPHLVTDGPQHHHHLHHSQQPPPPSAVPAQSLQPSPQQQPPPQPQSAAQQLGSAAAAPRTSTSSFLIKDILGDSKPLAACAPYSTSVSSPHHTPKQESNAAHESFRPKLEQEDGKTKLDKREDPQSDIKCHGTKEEGDREITSSRESPPVRAKKPRKARTAFSDHQLNQLERSFERQKYLSVQDRMDLAAALNLTDTQVKTWYQNRRTKWKRQTAVGLELLAEAGNYSALQRMFPSPYFYHPSLLGSMDSTTAAAAAAAMYSSMYRTPPAPHPQLQRPLVPRVLIHGLGPGGQPALNPLSNPIPGTPHPR.

3 disordered regions span residues 1 to 134 (MTAM…APRT), 154 to 235 (CAPY…ARTA), and 364 to 384 (PGGQ…PHPR). Composition is skewed to low complexity over residues 101 to 110 (VPAQSLQPSP) and 119 to 134 (QSAA…APRT). Positions 157-175 (YSTSVSSPHHTPKQESNAA) are enriched in polar residues. Positions 177 to 217 (ESFRPKLEQEDGKTKLDKREDPQSDIKCHGTKEEGDREITS) are enriched in basic and acidic residues. The homeobox DNA-binding region spans 229–288 (PRKARTAFSDHQLNQLERSFERQKYLSVQDRMDLAAALNLTDTQVKTWYQNRRTKWKRQT).

This sequence belongs to the BAR homeobox family.

It localises to the nucleus. Its function is as follows. Potential regulator of neural basic helix-loop-helix genes. It may down-regulate expression of ASCL1 and, within the thalamus, up-regulate NGN2, thereby regulating distinct patterns of neuronal differentiation. The chain is BarH-like 2 homeobox protein (Barhl2) from Mus musculus (Mouse).